We begin with the raw amino-acid sequence, 1404 residues long: DNA-directed RNA polymerase subunit beta' (1404 aa).

Residues Cys70, Cys72, Cys85, and Cys88 each coordinate Zn(2+). Positions 460, 462, and 464 each coordinate Mg(2+). Positions 814, 888, 895, and 898 each coordinate Zn(2+).

It belongs to the RNA polymerase beta' chain family. The RNAP catalytic core consists of 2 alpha, 1 beta, 1 beta' and 1 omega subunit. When a sigma factor is associated with the core the holoenzyme is formed, which can initiate transcription. Mg(2+) serves as cofactor. The cofactor is Zn(2+).

It carries out the reaction RNA(n) + a ribonucleoside 5'-triphosphate = RNA(n+1) + diphosphate. Functionally, DNA-dependent RNA polymerase catalyzes the transcription of DNA into RNA using the four ribonucleoside triphosphates as substrates. The sequence is that of DNA-directed RNA polymerase subunit beta' from Shewanella pealeana (strain ATCC 700345 / ANG-SQ1).